We begin with the raw amino-acid sequence, 101 residues long: Cysteine-rich and transmembrane domain-containing protein B (101 aa).

The tract at residues 1–80 (MSQQPPAVGV…PQQQQQQKHS (80 aa)) is disordered. Pro residues predominate over residues 24–43 (DAYPPPGQPYPQQGYPPPQG). Over residues 59-77 (YPEQGYPQQGYPPQQQQQQ) the composition is skewed to low complexity. A helical transmembrane segment spans residues 78 to 95 (KHSPGMLEGCIAALCCYC).

This sequence belongs to the CYSTM1 family.

The protein localises to the membrane. This is Cysteine-rich and transmembrane domain-containing protein B from Arabidopsis thaliana (Mouse-ear cress).